Here is a 462-residue protein sequence, read N- to C-terminus: Myo-inositol transporter 3B (462 aa).

10 helical membrane passes run 1 to 21 (MAIL…ASSY), 31 to 51 (IILG…ITET), 61 to 81 (IGVN…IGAG), 91 to 111 (LLFA…HYLP), 194 to 214 (LCGF…LGLS), 218 to 238 (LGGL…MSLV), 245 to 265 (GLML…IIGF), 289 to 309 (VVIG…SHLV), 324 to 344 (GSGV…VSYL), and 354 to 374 (GTYG…VFCF).

The protein belongs to the major facilitator superfamily. Sugar transporter (TC 2.A.1.1) family.

The protein localises to the cell membrane. It carries out the reaction myo-inositol(out) + H(+)(out) = myo-inositol(in) + H(+)(in). In terms of biological role, transporter for myo-inositol. The polypeptide is Myo-inositol transporter 3B (Cryptococcus neoformans var. grubii serotype A (strain H99 / ATCC 208821 / CBS 10515 / FGSC 9487) (Filobasidiella neoformans var. grubii)).